A 202-amino-acid polypeptide reads, in one-letter code: S-modulin (202 aa).

A lipid anchor (N-myristoyl glycine) is attached at G2. 4 consecutive EF-hand domains span residues Q25–A60, D61–G96, K97–M132, and T147–I182. Residues D74, N76, D78, T80, E85, D110, D112, N114, T116, and E121 each coordinate Ca(2+).

It belongs to the recoverin family. Post-translationally, the N-terminus is blocked.

Its function is as follows. Calcium-dependent regulator of light sensitivity of cGMP phosphodiesterase in rod outer segments. Controls rhodopsin phosphorylation in a Ca(2+)-dependent manner. This Aquarana catesbeiana (American bullfrog) protein is S-modulin.